The sequence spans 99 residues: MLEQQRNSADALTVSVLNAQSQVTSKPLRDSVKQALRNYLAQLDGQDVNDLYELVLAEVEHPMLDMIMQYTRGNQTRAANMLGINRGTLRKKLKKYGMG.

The H-T-H motif DNA-binding region spans 75–94; that stretch reads QTRAANMLGINRGTLRKKLK.

This sequence belongs to the transcriptional regulatory Fis family. Homodimer.

Its function is as follows. Activates ribosomal RNA transcription. Plays a direct role in upstream activation of rRNA promoters. The chain is DNA-binding protein Fis from Haemophilus influenzae (strain PittEE).